Here is a 204-residue protein sequence, read N- to C-terminus: Tumor protein D53 (204 aa).

A disordered region spans residues 1–31 (MEAQAQGLLETEPLQGRDGDAVGSADFSSML). Positions 22 to 73 (VGSADFSSMLSEEEKEELKAELIQLEDEITTLRQVLSAKERHLVEIKQKLGM) form a coiled coil. 4 positions are modified to phosphoserine: Ser29, Ser86, Ser122, and Ser131. Arg133 bears the Omega-N-methylarginine mark. A Phosphothreonine modification is found at Thr146. A phosphoserine mark is found at Ser149 and Ser174. The segment at 164-204 (KVGGTNHGGGSFEEVLNSTAHASSQNASAGSRQTKDEELQC) is disordered. A compositionally biased stretch (polar residues) spans 179-195 (LNSTAHASSQNASAGSR).

The protein belongs to the TPD52 family. Forms a homodimer or heterodimer with other members of the family.

The protein is Tumor protein D53 (Tpd52l1) of Mus musculus (Mouse).